The sequence spans 309 residues: Serine/threonine-protein phosphatase PP2A catalytic subunit (309 aa).

4 residues coordinate Mn(2+): Asp-57, His-59, Asp-85, and Asn-117. His-118 functions as the Proton donor in the catalytic mechanism. Residues His-167 and His-241 each coordinate Mn(2+).

This sequence belongs to the PPP phosphatase family. PP-2A subfamily. Mn(2+) serves as cofactor.

The catalysed reaction is O-phospho-L-seryl-[protein] + H2O = L-seryl-[protein] + phosphate. It catalyses the reaction O-phospho-L-threonyl-[protein] + H2O = L-threonyl-[protein] + phosphate. The sequence is that of Serine/threonine-protein phosphatase PP2A catalytic subunit from Brassica napus (Rape).